We begin with the raw amino-acid sequence, 507 residues long: tRNA(Ile)-lysidine synthase (507 aa).

24–29 is an ATP binding site; the sequence is SGGGDS. The CMP/dCMP-type deaminase domain maps to 370–500; that stretch reads PPEEAHMAEA…KLLRDFFARL (131 aa). Positions 420, 445, and 448 each coordinate Zn(2+).

It belongs to the tRNA(Ile)-lysidine synthase family.

It is found in the cytoplasm. The enzyme catalyses cytidine(34) in tRNA(Ile2) + L-lysine + ATP = lysidine(34) in tRNA(Ile2) + AMP + diphosphate + H(+). In terms of biological role, ligates lysine onto the cytidine present at position 34 of the AUA codon-specific tRNA(Ile) that contains the anticodon CAU, in an ATP-dependent manner. Cytidine is converted to lysidine, thus changing the amino acid specificity of the tRNA from methionine to isoleucine. This is tRNA(Ile)-lysidine synthase (tilS) from Thermus thermophilus (strain ATCC 27634 / DSM 579 / HB8).